Consider the following 361-residue polypeptide: Phosphate acyltransferase (361 aa).

The tract at residues 342–361 (ADGAAAEQGPTPRRTAPRQT) is disordered.

Belongs to the PlsX family. As to quaternary structure, homodimer. Probably interacts with PlsY.

It localises to the cytoplasm. It catalyses the reaction a fatty acyl-[ACP] + phosphate = an acyl phosphate + holo-[ACP]. The protein operates within lipid metabolism; phospholipid metabolism. Catalyzes the reversible formation of acyl-phosphate (acyl-PO(4)) from acyl-[acyl-carrier-protein] (acyl-ACP). This enzyme utilizes acyl-ACP as fatty acyl donor, but not acyl-CoA. The protein is Phosphate acyltransferase of Anaeromyxobacter sp. (strain K).